The sequence spans 98 residues: Cobalt transport protein CbiN (98 aa).

The next 2 helical transmembrane spans lie at 6 to 26 (VLMI…YSGL) and 68 to 88 (SLLF…FFGY).

This sequence belongs to the CbiN family. Forms an energy-coupling factor (ECF) transporter complex composed of an ATP-binding protein (A component, CbiO), a transmembrane protein (T component, CbiQ) and 2 possible substrate-capture proteins (S components, CbiM and CbiN) of unknown stoichimetry.

The protein localises to the cell membrane. Its pathway is cofactor biosynthesis; adenosylcobalamin biosynthesis. Its function is as follows. Part of the energy-coupling factor (ECF) transporter complex CbiMNOQ involved in cobalt import. This chain is Cobalt transport protein CbiN, found in Methanococcus maripaludis (strain DSM 14266 / JCM 13030 / NBRC 101832 / S2 / LL).